The following is a 293-amino-acid chain: SAGA-associated factor 29 (293 aa).

Residues 3-88 adopt a coiled-coil conformation; that stretch reads LVSADSRIAE…KALDKIAEIK (86 aa). An SGF29 C-terminal domain is found at 152-293; the sequence is GDYVAKPGDK…VVACKEPKKK (142 aa). Histone H3K4me3 N-terminus binding stretches follow at residues 194-196 and 240-243; these read DID and QTTC. Residues 264–266 are histone H3K4me3 binding; sequence FED. At Lys288 the chain carries N6-acetyllysine.

It belongs to the SGF29 family. Interacts with dimethylated and trimethylated 'Lys-4' of histone H3 (H3K4me2 and H3K4me3), with a preference for the trimethylated form (H3K4me3). Component of some SAGA-type complexes. Component of the ADA2A-containing complex (ATAC), composed of KAT14, KAT2A, TADA2L, TADA3L, ZZ3, MBIP, WDR5, YEATS2, CCDC101 and DR1. Interacts with (methylated) CGAS. Interacts with TADA3L, GCN5L2, SUPT3H and MYC. Widely expressed with highest levels in testis. Highly expressed in hepatoma and other tumor cell lines.

Its subcellular location is the nucleus. In terms of biological role, chromatin reader component of some histone acetyltransferase (HAT) SAGA-type complexes like the TFTC-HAT, ATAC or STAGA complexes. SGF29 specifically recognizes and binds methylated 'Lys-4' of histone H3 (H3K4me), with a preference for trimethylated form (H3K4me3). In the SAGA-type complexes, SGF29 is required to recruit complexes to H3K4me. Involved in the response to endoplasmic reticulum (ER) stress by recruiting the SAGA complex to H3K4me, thereby promoting histone H3 acetylation and cell survival. Also binds non-histone proteins that are methylated on Lys residues: specifically recognizes and binds CGAS monomethylated on 'Lys-491'. May be involved in MYC-mediated oncogenic transformation. The polypeptide is SAGA-associated factor 29 (Rattus norvegicus (Rat)).